The primary structure comprises 227 residues: Ornithine decarboxylase antizyme 1 (227 aa).

The disordered stretch occupies residues 20–50 (EGDKPSATVHATRTMPLLSLHSRGGRSSESS). Residues 36 to 50 (LLSLHSRGGRSSESS) show a composition bias toward low complexity.

Belongs to the ODC antizyme family. Interacts with ODC1 and thereby sterically blocks ODC homodimerization. Forms a ternary complex with PSMB4 and OAZ1 before PSMB4 is incorporated into the 20S proteasome. Interacts with AZIN2; this interaction disrupts the interaction between the antizyme and ODC1. Interacts with FAM171A1.

Its function is as follows. Ornithine decarboxylase (ODC) antizyme protein that negatively regulates ODC activity and intracellular polyamine biosynthesis and uptake in response to increased intracellular polyamine levels. Binds to ODC monomers, inhibiting the assembly of the functional ODC homodimer, and targets the monomers for ubiquitin-independent proteolytic destruction by the 26S proteasome. Triggers ODC degradation by inducing the exposure of a cryptic proteasome-interacting surface of ODC. Stabilizes AZIN2 by interfering with its ubiquitination. Also inhibits cellular uptake of polyamines by inactivating the polyamine uptake transporter. SMAD1/OAZ1/PSMB4 complex mediates the degradation of the CREBBP/EP300 repressor SNIP1. Involved in the translocation of AZIN2 from ER-Golgi intermediate compartment (ERGIC) to the cytosol. In Bos taurus (Bovine), this protein is Ornithine decarboxylase antizyme 1 (OAZ1).